We begin with the raw amino-acid sequence, 450 residues long: Chromosomal replication initiator protein DnaA (450 aa).

A domain I, interacts with DnaA modulators region spans residues methionine 1–glutamine 84. The segment at glutamine 84 to serine 111 is domain II. The domain III, AAA+ region stretch occupies residues methionine 112–serine 328. Residues glycine 156, glycine 158, lysine 159, and threonine 160 each contribute to the ATP site. The segment at serine 329–leucine 450 is domain IV, binds dsDNA.

It belongs to the DnaA family. As to quaternary structure, oligomerizes as a right-handed, spiral filament on DNA at oriC.

Its subcellular location is the cytoplasm. In terms of biological role, plays an essential role in the initiation and regulation of chromosomal replication. ATP-DnaA binds to the origin of replication (oriC) to initiate formation of the DNA replication initiation complex once per cell cycle. Binds the DnaA box (a 9 base pair repeat at the origin) and separates the double-stranded (ds)DNA. Forms a right-handed helical filament on oriC DNA; dsDNA binds to the exterior of the filament while single-stranded (ss)DNA is stabiized in the filament's interior. The ATP-DnaA-oriC complex binds and stabilizes one strand of the AT-rich DNA unwinding element (DUE), permitting loading of DNA polymerase. After initiation quickly degrades to an ADP-DnaA complex that is not apt for DNA replication. Binds acidic phospholipids. This is Chromosomal replication initiator protein DnaA from Geobacillus thermodenitrificans (strain NG80-2).